The chain runs to 396 residues: Elongation factor Tu (396 aa).

The region spanning 10–205 (KTHANIGTIG…AVDDYIPTPE (196 aa)) is the tr-type G domain. Residues 19–26 (GHVDHGKT) form a G1 region. A GTP-binding site is contributed by 19–26 (GHVDHGKT). Residue Thr26 participates in Mg(2+) binding. The tract at residues 61 to 65 (GITIS) is G2. A G3 region spans residues 82–85 (DCPG). Residues 82-86 (DCPGH) and 137-140 (NKCD) each bind GTP. The G4 stretch occupies residues 137-140 (NKCD). The tract at residues 175–177 (SAL) is G5.

It belongs to the TRAFAC class translation factor GTPase superfamily. Classic translation factor GTPase family. EF-Tu/EF-1A subfamily. In terms of assembly, monomer.

It is found in the cytoplasm. The catalysed reaction is GTP + H2O = GDP + phosphate + H(+). GTP hydrolase that promotes the GTP-dependent binding of aminoacyl-tRNA to the A-site of ribosomes during protein biosynthesis. The polypeptide is Elongation factor Tu (Halalkalibacterium halodurans (strain ATCC BAA-125 / DSM 18197 / FERM 7344 / JCM 9153 / C-125) (Bacillus halodurans)).